The sequence spans 168 residues: Oocyte-secreted protein 2 (168 aa).

The first 21 residues, 1–21, serve as a signal peptide directing secretion; that stretch reads MGVSMALEVLVYLAVLVWTCA.

Belongs to the PLAC1 family. As to expression, expressed in ovaries. Highly expressed in the germinal vesicles oocytes and metaphase II oocytes.

The protein localises to the secreted. It is found in the cytoplasm. The polypeptide is Oocyte-secreted protein 2 (Oosp2) (Mus musculus (Mouse)).